Reading from the N-terminus, the 312-residue chain is Olfactory receptor 6C68 (312 aa).

The Extracellular segment spans residues 1–23; it reads MRKHTAITTFILLGLTEDPQLQV. Residues 24 to 44 traverse the membrane as a helical segment; sequence LLFMFLFITYMLSVTGKLTII. Topologically, residues 45 to 55 are cytoplasmic; sequence ALTMLDPHLKT. A helical membrane pass occupies residues 56-76; the sequence is PMYFFLQNLSFLEISFTATCV. The Extracellular portion of the chain corresponds to 77–95; it reads PRFLYSISTGNKIITYNAC. A disulfide bond links C95 and C177. The chain crosses the membrane as a helical span at residues 96 to 116; that stretch reads VIQLFFADLFGVTEFFLLATM. Topologically, residues 117-143 are cytoplasmic; the sequence is SYDRYVAICKPLHYMAIMSNKVCKTMV. The helical transmembrane segment at 144-164 threads the bilayer; that stretch reads ICCWMAALMIILPPLSLGFHL. Residues 165–197 are Extracellular-facing; sequence EFCDSNVINHFGCDALPILKIPCSDTSLIEQMV. The helical transmembrane segment at 198–218 threads the bilayer; it reads VASAVLTFIITLVCVVLSYTY. Topologically, residues 219–239 are cytoplasmic; sequence IIRTILKFPSVQQKKKAFSTC. Residues 240–260 form a helical membrane-spanning segment; the sequence is SSHITVVSITYGSCIFIYIKP. Over 261 to 271 the chain is Extracellular; sequence SAKEEVNINKG. The helical transmembrane segment at 272-292 threads the bilayer; that stretch reads VSVLISSISPMLNSFIYTLRN. Residues 293-312 lie on the Cytoplasmic side of the membrane; the sequence is EQVKQAFHDSLKKIAFRLKK.

This sequence belongs to the G-protein coupled receptor 1 family.

Its subcellular location is the cell membrane. In terms of biological role, odorant receptor. This chain is Olfactory receptor 6C68 (OR6C68), found in Homo sapiens (Human).